We begin with the raw amino-acid sequence, 145 residues long: Deoxyuridine 5'-triphosphate nucleotidohydrolase (145 aa).

Substrate is bound by residues Arg-62–Gly-64, Asn-75, Thr-79–Asp-81, and Lys-89.

Belongs to the dUTPase family. Mg(2+) is required as a cofactor.

It carries out the reaction dUTP + H2O = dUMP + diphosphate + H(+). Its pathway is pyrimidine metabolism; dUMP biosynthesis; dUMP from dCTP (dUTP route): step 2/2. This enzyme is involved in nucleotide metabolism: it produces dUMP, the immediate precursor of thymidine nucleotides and it decreases the intracellular concentration of dUTP so that uracil cannot be incorporated into DNA. This chain is Deoxyuridine 5'-triphosphate nucleotidohydrolase, found in Helicobacter pylori (strain Shi470).